The following is a 367-amino-acid chain: Alginate lyase (367 aa).

The N-terminal stretch at 1–27 (MKTSHLIRIALPGALAAALLASQVSQA) is a signal peptide. Substrate is bound by residues 65-66 (SK), 138-139 (HT), and Tyr256.

This sequence belongs to the polysaccharide lyase 5 family.

Its subcellular location is the periplasm. The enzyme catalyses Eliminative cleavage of alginate to give oligosaccharides with 4-deoxy-alpha-L-erythro-hex-4-enuronosyl groups at their non-reducing ends and beta-D-mannuronate at their reducing end.. In terms of biological role, catalyzes the depolymerization of alginate by cleaving the beta-1,4 glycosidic bond between two adjacent sugar residues via a beta-elimination mechanism. May serve to degrade mislocalized alginate that is trapped in the periplasmic space. The chain is Alginate lyase from Pseudomonas aeruginosa (strain LESB58).